We begin with the raw amino-acid sequence, 536 residues long: Velvet complex subunit B (536 aa).

A compositionally biased stretch (polar residues) spans 1-26 (MIQRTTDPAAGSSTSGPPTNSLSWGS). Disordered stretches follow at residues 1–27 (MIQR…WGSR), 106–143 (PNAA…AIPF), 157–409 (SAPA…RTLV), and 508–536 (KLPL…EESD). In terms of domain architecture, Velvet spans 25-512 (GSRHNGKLYT…NQQNMKLPLR (488 aa)). A compositionally biased stretch (pro residues) spans 114-143 (PPMPAKPRRPTNPPPPSNTHGSPPAPAIPF). Low complexity-rich tracts occupy residues 158–170 (APAS…SASA) and 190–265 (PYGP…YPPY). Residues 280 to 305 (TSNFDHSQPVTSSVDQETNSPVVTTT) are compositionally biased toward polar residues. The segment covering 306-315 (ARDDDQREGE) has biased composition (basic and acidic residues). Low complexity predominate over residues 328–342 (PSNSGAPSTSPTAST). Basic and acidic residues predominate over residues 356 to 399 (EEREGPDGGPDLREPIEPGSTKAREEEDARTGTEKGDPKDKSDA). Residues 400 to 409 (QRATYTRTLV) are compositionally biased toward polar residues. Residues 511 to 525 (LRNRHGSGSKRRRRG) are compositionally biased toward basic residues.

Belongs to the velvet family. VelB subfamily. In terms of assembly, component of the heterotrimeric velvet complex composed of laeA, veA and velB; VeA acting as a bridging protein between laeA and velB. Forms a heterodimeric complex with vosA; the formation of the velB-vosA complex is light-dependent.

Its subcellular location is the nucleus. It localises to the cytoplasm. Component of the velvet transcription factor complex that controls sexual/asexual developmental ratio in response to light, promoting sexual development in the darkness while stimulating asexual sporulation under illumination. The velvet complex acts as a global regulator for secondary metabolite gene expression. Component of the velB-VosA heterodimeric complex that plays a dual role in activating genes associated with spore maturation and repressing certain development-associated genes. The velB-VosA complex binds DNA through the DNA-binding domain of vosA that recognizes an 11-nucleotide consensus sequence 5'-CTGGCCGCGGC-3' consisting of two motifs in the promoters of key developmental regulatory genes. This Schizophyllum commune (strain H4-8 / FGSC 9210) (Split gill fungus) protein is Velvet complex subunit B.